A 269-amino-acid polypeptide reads, in one-letter code: Regulatory protein RecX (269 aa).

It belongs to the RecX family.

It localises to the cytoplasm. Modulates RecA activity. The protein is Regulatory protein RecX of Listeria monocytogenes serotype 4b (strain F2365).